The following is a 196-amino-acid chain: GTP cyclohydrolase 1 (196 aa).

Zn(2+) contacts are provided by cysteine 84, histidine 87, and cysteine 157.

It belongs to the GTP cyclohydrolase I family. As to quaternary structure, toroid-shaped homodecamer, composed of two pentamers of five dimers.

The enzyme catalyses GTP + H2O = 7,8-dihydroneopterin 3'-triphosphate + formate + H(+). Its pathway is cofactor biosynthesis; 7,8-dihydroneopterin triphosphate biosynthesis; 7,8-dihydroneopterin triphosphate from GTP: step 1/1. This Corynebacterium glutamicum (strain R) protein is GTP cyclohydrolase 1.